The chain runs to 176 residues: Cytochrome b (176 aa).

A run of 3 helical transmembrane segments spans residues 33 to 53 (FGSL…FLAM), 77 to 98 (WLIR…FLHV), and 113 to 133 (WNIG…GYVL). Residues H83 and H97 each contribute to the heme b site.

It belongs to the cytochrome b family. In terms of assembly, the cytochrome bc1 complex contains 11 subunits: 3 respiratory subunits (MT-CYB, CYC1 and UQCRFS1), 2 core proteins (UQCRC1 and UQCRC2) and 6 low-molecular weight proteins (UQCRH/QCR6, UQCRB/QCR7, UQCRQ/QCR8, UQCR10/QCR9, UQCR11/QCR10 and a cleavage product of UQCRFS1). This cytochrome bc1 complex then forms a dimer. Heme b serves as cofactor.

Its subcellular location is the mitochondrion inner membrane. Its function is as follows. Component of the ubiquinol-cytochrome c reductase complex (complex III or cytochrome b-c1 complex) that is part of the mitochondrial respiratory chain. The b-c1 complex mediates electron transfer from ubiquinol to cytochrome c. Contributes to the generation of a proton gradient across the mitochondrial membrane that is then used for ATP synthesis. This is Cytochrome b (MT-CYB) from Sciurus carolinensis (Eastern gray squirrel).